The primary structure comprises 77 residues: Acyl carrier protein (77 aa).

The Carrier domain maps to 1 to 76 (MENFDKVKDI…DAVNFINNLE (76 aa)). O-(pantetheine 4'-phosphoryl)serine is present on S36.

Belongs to the acyl carrier protein (ACP) family. Post-translationally, 4'-phosphopantetheine is transferred from CoA to a specific serine of apo-ACP by AcpS. This modification is essential for activity because fatty acids are bound in thioester linkage to the sulfhydryl of the prosthetic group.

Its subcellular location is the cytoplasm. It participates in lipid metabolism; fatty acid biosynthesis. Carrier of the growing fatty acid chain in fatty acid biosynthesis. The protein is Acyl carrier protein of Staphylococcus carnosus (strain TM300).